We begin with the raw amino-acid sequence, 106 residues long: Large ribosomal subunit protein uL24 (106 aa).

Residues 84-97 are compositionally biased toward basic and acidic residues; that stretch reads EKIGRELGAKEKAR. Positions 84–106 are disordered; that stretch reads EKIGRELGAKEKARLQKRKTAAK.

It belongs to the universal ribosomal protein uL24 family. In terms of assembly, part of the 50S ribosomal subunit.

Its function is as follows. One of two assembly initiator proteins, it binds directly to the 5'-end of the 23S rRNA, where it nucleates assembly of the 50S subunit. One of the proteins that surrounds the polypeptide exit tunnel on the outside of the subunit. The sequence is that of Large ribosomal subunit protein uL24 from Anaeromyxobacter dehalogenans (strain 2CP-1 / ATCC BAA-258).